The following is a 406-amino-acid chain: Elongation factor Tu-B (406 aa).

Residues 10 to 215 form the tr-type G domain; the sequence is KPHVNVGTIG…AIDEYIPTPV (206 aa). The tract at residues 19 to 26 is G1; sequence GHVDHGKT. 19-26 lines the GTP pocket; the sequence is GHVDHGKT. T26 is a Mg(2+) binding site. Residues 61-65 are G2; it reads GITIN. The G3 stretch occupies residues 82-85; sequence DCPG. GTP is bound by residues 82–86 and 137–140; these read DCPGH and NKVD. The interval 137-140 is G4; that stretch reads NKVD. The tract at residues 175–177 is G5; that stretch reads SAL. Position 395 is a phosphothreonine (T395).

The protein belongs to the TRAFAC class translation factor GTPase superfamily. Classic translation factor GTPase family. EF-Tu/EF-1A subfamily. Monomer. In terms of processing, phosphorylated on a threonine.

The protein resides in the cytoplasm. It carries out the reaction GTP + H2O = GDP + phosphate + H(+). Functionally, GTP hydrolase that promotes the GTP-dependent binding of aminoacyl-tRNA to the A-site of ribosomes during protein biosynthesis. Protects glycyl-tRNA(Gly) from hydrolysis by E.coli D-aminoacyl-tRNA deacylase (dtd). This is Elongation factor Tu-B from Thermus thermophilus (strain ATCC 27634 / DSM 579 / HB8).